The primary structure comprises 172 residues: EPIDERMAL PATTERNING FACTOR-like protein 7 (172 aa).

A signal peptide spans 1-27; sequence MDHVNPTLFHLKSLSIFTLTLLYISSP. Intrachain disulfides connect C128–C159, C132–C138, C135–C161, and C147–C153.

Belongs to the plant cysteine rich small secretory peptide family. Epidermal patterning factor subfamily.

The protein resides in the secreted. Functionally, controls stomatal patterning. The sequence is that of EPIDERMAL PATTERNING FACTOR-like protein 7 from Arabidopsis thaliana (Mouse-ear cress).